A 234-amino-acid polypeptide reads, in one-letter code: Ammonia monooxygenase gamma subunit (234 aa).

The first 20 residues, 1–20 (MRMIKFLLLAILLAPFVAHS), serve as a signal peptide directing secretion. Residues 38–193 (ESLQRGAKGF…RFVADLVNYM (156 aa)) form the Cytochrome c domain. Heme c is bound by residues Cys51, Cys54, and His55. The helical transmembrane segment at 206 to 226 (ELGITVLLFLFGMLGLTYLLK) threads the bilayer.

This sequence belongs to the cytochrome c family. In terms of assembly, the soluble ammonia monooxygenase is a nonamer composed of three alpha subunits (AmoA), three beta subunits (AmoB) and three gamma subunits (Cytochrome c1 PetC). The cofactor is heme c.

It localises to the cell membrane. Its subcellular location is the cytoplasm. Its function is as follows. Part of the ammonia monooxygenase complex, which catalyzes the oxidation of ammonia to hydroxylamine, the first reaction in the process of ammonia oxidation to nitrite. This is Ammonia monooxygenase gamma subunit from Nitrosomonas europaea (strain ATCC 19718 / CIP 103999 / KCTC 2705 / NBRC 14298).